A 345-amino-acid chain; its full sequence is Uroporphyrinogen decarboxylase (345 aa).

Substrate is bound by residues 30-34 (RQAGR), aspartate 79, tyrosine 154, serine 209, and histidine 322.

Belongs to the uroporphyrinogen decarboxylase family. In terms of assembly, homodimer.

The protein localises to the cytoplasm. It catalyses the reaction uroporphyrinogen III + 4 H(+) = coproporphyrinogen III + 4 CO2. It functions in the pathway porphyrin-containing compound metabolism; protoporphyrin-IX biosynthesis; coproporphyrinogen-III from 5-aminolevulinate: step 4/4. Catalyzes the decarboxylation of four acetate groups of uroporphyrinogen-III to yield coproporphyrinogen-III. In Nocardioides sp. (strain ATCC BAA-499 / JS614), this protein is Uroporphyrinogen decarboxylase.